The sequence spans 105 residues: D-galactoside-specific lectin (105 aa).

In terms of domain architecture, SUEL-type lectin spans 13 to 103 (VCEDSSLTIS…KYLAVTYICS (91 aa)).

In terms of assembly, homodimer; disulfide-linked.

Its subcellular location is the cytoplasm. In terms of biological role, this protein binds D-galactoside. May have an important role in the activation of eggs (triggered by fertilization), or in their subsequent differentiation. The dimeric form is essential for hemagglutination activity. The protein is D-galactoside-specific lectin of Heliocidaris crassispina (Sea urchin).